The sequence spans 1792 residues: uncharacterized protein (1792 aa).

Positions 1–28 (MNNNNNNNNNSNNNNNSNNNNNGNSNNN) are enriched in low complexity. 13 disordered regions span residues 1–34 (MNNN…SGKG), 162–187 (TNIS…SHHH), 440–461 (KKRK…NKSS), 544–568 (VIDD…SIIN), 736–777 (NKNK…INSN), 837–979 (TKGK…NDLK), 1044–1071 (VSKS…KEQS), 1084–1106 (NMNN…NDNK), 1160–1215 (TSSG…VLER), 1257–1290 (NITA…NNNG), 1651–1686 (LRSK…GRKK), 1704–1731 (PRKK…NSEK), and 1742–1761 (IENK…NLNN). Residues 169–182 (KQPISSNQHPYQQK) are compositionally biased toward polar residues. Basic residues predominate over residues 550 to 559 (KRNKKEKKKT). Positions 741 to 776 (PNNINSNDNNNKNDDNNNNNNKNVDGNNNNNNNINS) are enriched in low complexity. Positions 838–847 (KGKKKGRKKK) are enriched in basic residues. Positions 856–873 (NIKEDIKSSKKDKKKDNI) are enriched in basic and acidic residues. The span at 874-924 (NDNNNDNNNDNNNDNNNDNNNDNNNDNNNDNNNNNNNNNNNNNNNNNNNHN) shows a compositional bias: low complexity. Residues 943-954 (KKKTRQYRKKSK) show a composition bias toward basic residues. Residues 955–966 (ITNDDNNEKIKQ) show a composition bias toward basic and acidic residues. The span at 1045 to 1057 (SKSNIPSSFSSPP) shows a compositional bias: low complexity. 3 stretches are compositionally biased toward basic and acidic residues: residues 1060–1071 (TNNKNDIDKEQS), 1088–1106 (EKSK…NDNK), and 1166–1192 (NKEE…KNVD). The segment covering 1205–1215 (RKKRKKDVLER) has biased composition (basic residues). The span at 1261 to 1289 (NNNNDNNKNNDNDNNNNNNDNIINNNNNN) shows a compositional bias: low complexity. 2 stretches are compositionally biased toward basic residues: residues 1660–1686 (KEHK…GRKK) and 1704–1717 (PRKK…RKSK).

This is an uncharacterized protein from Plasmodium falciparum (isolate 3D7).